A 60-amino-acid polypeptide reads, in one-letter code: Cytotoxin 2a (60 aa).

Disulfide bonds link cysteine 3–cysteine 21, cysteine 14–cysteine 38, cysteine 42–cysteine 53, and cysteine 54–cysteine 59.

The protein belongs to the three-finger toxin family. Short-chain subfamily. Type IA cytotoxin sub-subfamily. As to quaternary structure, monomer in solution; Homodimer and oligomer in the presence of negatively charged lipids forming a pore with a size ranging between 20 and 30 Angstroms. In terms of tissue distribution, expressed by the venom gland.

It localises to the secreted. The protein localises to the target cell membrane. Its function is as follows. Shows cytolytic activity on many different cells by forming pore in lipid membranes. In vivo, increases heart rate or kills the animal by cardiac arrest. In addition, it binds to heparin with high affinity, interacts with Kv channel-interacting protein 1 (KCNIP1) in a calcium-independent manner, and binds to integrin alpha-V/beta-3 (ITGAV/ITGB3) with moderate affinity. Preferentially binds acidic phospholipids like phosphatidylserine, phosphatidic acid and phosphatidyl glycerol. Has hemolytic activity towards human erythrocytes (EC(50)=1.024 uM) and cytolytic activity towards various cell lines. This is Cytotoxin 2a from Naja naja (Indian cobra).